A 617-amino-acid chain; its full sequence is Prothrombin (617 aa).

A signal peptide spans 1–24; it reads MLHVRGLGLPGCLALAALASLVHS. Positions 25-43 are excised as a propeptide; sequence QHVFLAPQQALSLLQRVRR. One can recognise a Gla domain in the interval 44–90; sequence ANSGFLEELRKGNLERECVEEQCSYEEAFEALESPQDTDVFWAKYTV. Glu-50, Glu-51, Glu-58, Glu-60, Glu-63, Glu-64, Glu-69, Glu-70, Glu-73, and Glu-76 each carry 4-carboxyglutamate. Residues Cys-61 and Cys-66 are joined by a disulfide bond. Disulfide bonds link Cys-91–Cys-104, Cys-109–Cys-187, Cys-130–Cys-170, Cys-158–Cys-182, Cys-215–Cys-292, Cys-236–Cys-276, Cys-264–Cys-287, Cys-332–Cys-478, Cys-387–Cys-403, and Cys-532–Cys-546. 2 Kringle domains span residues 109–187 and 215–292; these read CAMD…IPVC and CLLE…LNYC. N-linked (GlcNAc...) asparagine glycans are attached at residues Asn-120 and Asn-144. In terms of domain architecture, Peptidase S1 spans 360 to 614; sequence IVEGWDAEKG…LKRWMQKVID (255 aa). Residue His-402 is the Charge relay system of the active site. Asn-412 carries N-linked (GlcNAc...) asparagine glycosylation. Residue Asp-458 is the Charge relay system of the active site. A high affinity receptor-binding region which is also known as the TP508 peptide region spans residues 547 to 569; sequence AGFKVNDTKRGDACEGDSGGPFV. N-linked (GlcNAc...) asparagine glycosylation occurs at Asn-552. Cys-560 and Cys-590 are oxidised to a cystine. The active-site Charge relay system is Ser-564.

This sequence belongs to the peptidase S1 family. Heterodimer (named alpha-thrombin) of a light and a heavy chain; disulfide-linked. Forms a heterodimer with SERPINA5. In plasma, interacts (via N-terminus) with alpha-1-microglobulin; this interaction does not prevent the activation of prothrombin to thrombin. The gamma-carboxyglutamyl residues, which bind calcium ions, result from the carboxylation of glutamyl residues by a microsomal enzyme, the vitamin K-dependent carboxylase. The modified residues are necessary for the calcium-dependent interaction with a negatively charged phospholipid surface, which is essential for the conversion of prothrombin to thrombin. Post-translationally, in the penultimate step of the coagulation cascade, prothrombin is converted to thrombin by the prothrombinase complex composed of factor Xa (F10), cofactor Va (F5), and phospholipids. This activation requires factor Xa-catalyzed sequential cleavage at 2 sites, Arg-310 and Arg-359, along 2 possible pathways. In the first pathway, the first cleavage occurs at Arg-310, leading to the formation of the inactive intermediate prethrombin-2. This pathway preferentially occurs on platelets and in the absence of cofactor Va. In the second pathway, the first cleavage occurs at Arg-359, which separates protease domain into 2 chains that remain connected through a disulfide bond and generates the active intermediate meizothrombin. The presence of cofactor Va directs activation along the meizothrombin pathway and greatly accelerates the rate of cleavage at Arg-359, but has a smaller effect on the cleavage of meizothrombin at Arg-310. Meizothrombin accumulates as an intermediate when prothrombinase is assembled on the membrane of red blood cells.

The catalysed reaction is Selective cleavage of Arg-|-Gly bonds in fibrinogen to form fibrin and release fibrinopeptides A and B.. Activity is promoted in the presence of negatively charged surfaces, such as polyphosphate and dextran sulfate. Inhibited by SERPINA5. In terms of biological role, thrombin, which cleaves bonds after Arg and Lys, converts fibrinogen to fibrin and activates factors V, VII, VIII, XIII, and, in complex with thrombomodulin, protein C. Functions in blood homeostasis, inflammation and wound healing. Activates coagulation factor XI (F11); activation is promoted by the contact with negatively charged surfaces. Triggers the production of pro-inflammatory cytokines, such as MCP-1/CCL2 and IL8/CXCL8, in endothelial cells. The protein is Prothrombin (F2) of Rattus norvegicus (Rat).